The chain runs to 553 residues: Glycine betaine/proline/choline transporter VP1723 (553 aa).

12 consecutive transmembrane segments (helical) span residues 43–63 (NRVFAISGMAIVLFVVATLTF), 85–105 (FFLASGNVFVIVCLVLIVTPL), 122–142 (AGWLAMLFAAGMGIGLVFFGV), 191–211 (WALHPWSIYALLALGLAIFSF), 231–251 (VWGWVGHIIDILAVVATVFGL), 278–298 (TQVVLIVVITALALISVVAGL), 310–330 (MILAAMLLFFVIIVGPTMAIL), 362–382 (WTAFYWAWWISWSPFVGMFIA), 393–413 (FIICVILIPSTVCVLWMTAFG), 443–463 (VMPFAEITSVVGIILVVVFFI), 490–510 (VFWCTFEGLVAIALMLGGGLA), and 515–535 (MAVTTGLPFTIVLLVATVSLI).

This sequence belongs to the BCCT transporter (TC 2.A.15) family.

Its subcellular location is the cell inner membrane. Involved in the uptake of osmoprotectants. Can transport glycine betaine, proline and choline. The protein is Glycine betaine/proline/choline transporter VP1723 of Vibrio parahaemolyticus serotype O3:K6 (strain RIMD 2210633).